We begin with the raw amino-acid sequence, 980 residues long: Hypoxia up-regulated protein 1 (980 aa).

Positions 1–24 (MREKLSLWAIFCLVVAFLPSQTES) are cleaved as a signal peptide. 2 disordered regions span residues 558–682 (EEES…DIAV) and 894–980 (KPKP…EDEL). Composition is skewed to basic and acidic residues over residues 599–656 (AGKE…PEEK) and 896–906 (KPKDKAKDKNS). Positions 907–916 (TSESSKANST) are enriched in polar residues. 2 stretches are compositionally biased toward basic and acidic residues: residues 918–949 (DAEK…KAEE) and 960–980 (TDDK…EDEL). The Prevents secretion from ER signature appears at 977–980 (EDEL).

Belongs to the heat shock protein 70 family.

It localises to the endoplasmic reticulum lumen. Functionally, has a pivotal role in cytoprotective cellular mechanisms triggered by oxygen deprivation. May play a role as a molecular chaperone and participate in protein folding. In Danio rerio (Zebrafish), this protein is Hypoxia up-regulated protein 1 (hyou1).